The sequence spans 305 residues: Homoserine kinase (305 aa).

Residue 95 to 105 (PHGRGLGSSSA) coordinates ATP.

This sequence belongs to the GHMP kinase family. Homoserine kinase subfamily.

It is found in the cytoplasm. The enzyme catalyses L-homoserine + ATP = O-phospho-L-homoserine + ADP + H(+). It participates in amino-acid biosynthesis; L-threonine biosynthesis; L-threonine from L-aspartate: step 4/5. Its function is as follows. Catalyzes the ATP-dependent phosphorylation of L-homoserine to L-homoserine phosphate. This Streptomyces avermitilis (strain ATCC 31267 / DSM 46492 / JCM 5070 / NBRC 14893 / NCIMB 12804 / NRRL 8165 / MA-4680) protein is Homoserine kinase.